Here is a 466-residue protein sequence, read N- to C-terminus: Asparagine--tRNA ligase (466 aa).

Belongs to the class-II aminoacyl-tRNA synthetase family. In terms of assembly, homodimer.

Its subcellular location is the cytoplasm. The catalysed reaction is tRNA(Asn) + L-asparagine + ATP = L-asparaginyl-tRNA(Asn) + AMP + diphosphate + H(+). The protein is Asparagine--tRNA ligase of Serratia proteamaculans (strain 568).